We begin with the raw amino-acid sequence, 453 residues long: Bifunctional protein GlmU (453 aa).

The segment at Met-1–Lys-225 is pyrophosphorylase. Residues Leu-6–Gly-9, Lys-20, Gln-71, Gly-76–Thr-77, Tyr-98–Asp-100, Gly-135, Glu-150, Asn-165, and Asn-223 contribute to the UDP-N-acetyl-alpha-D-glucosamine site. Asp-100 lines the Mg(2+) pocket. Asn-223 provides a ligand contact to Mg(2+). The segment at Ala-226–Asp-246 is linker. Positions Gly-247–Ser-453 are N-acetyltransferase. UDP-N-acetyl-alpha-D-glucosamine is bound by residues Arg-329 and Lys-347. His-359 serves as the catalytic Proton acceptor. UDP-N-acetyl-alpha-D-glucosamine-binding residues include Tyr-362 and Asn-373. Residues Ala-376, Asn-382–Tyr-383, Ser-401, and Ala-419 contribute to the acetyl-CoA site.

The protein in the N-terminal section; belongs to the N-acetylglucosamine-1-phosphate uridyltransferase family. It in the C-terminal section; belongs to the transferase hexapeptide repeat family. In terms of assembly, homotrimer. Mg(2+) is required as a cofactor.

The protein resides in the cytoplasm. It catalyses the reaction alpha-D-glucosamine 1-phosphate + acetyl-CoA = N-acetyl-alpha-D-glucosamine 1-phosphate + CoA + H(+). It carries out the reaction N-acetyl-alpha-D-glucosamine 1-phosphate + UTP + H(+) = UDP-N-acetyl-alpha-D-glucosamine + diphosphate. Its pathway is nucleotide-sugar biosynthesis; UDP-N-acetyl-alpha-D-glucosamine biosynthesis; N-acetyl-alpha-D-glucosamine 1-phosphate from alpha-D-glucosamine 6-phosphate (route II): step 2/2. The protein operates within nucleotide-sugar biosynthesis; UDP-N-acetyl-alpha-D-glucosamine biosynthesis; UDP-N-acetyl-alpha-D-glucosamine from N-acetyl-alpha-D-glucosamine 1-phosphate: step 1/1. It participates in bacterial outer membrane biogenesis; LPS lipid A biosynthesis. Functionally, catalyzes the last two sequential reactions in the de novo biosynthetic pathway for UDP-N-acetylglucosamine (UDP-GlcNAc). The C-terminal domain catalyzes the transfer of acetyl group from acetyl coenzyme A to glucosamine-1-phosphate (GlcN-1-P) to produce N-acetylglucosamine-1-phosphate (GlcNAc-1-P), which is converted into UDP-GlcNAc by the transfer of uridine 5-monophosphate (from uridine 5-triphosphate), a reaction catalyzed by the N-terminal domain. In Burkholderia ambifaria (strain MC40-6), this protein is Bifunctional protein GlmU.